The sequence spans 481 residues: MSATMSSARNSVVSLSSNGSVKVETRLVSNERSSSIQQEGAMLPSSSSKDDDLLSTSSDEVENMATRTLQQLEESTSIISANSDDDSVKKEKQAEKDVEKGNGKEEKANIQNEFGVCGWILTILSYLLIFFTLPISACMCIKVVQEYERAVIFRLGRLMPGGAKGPGIFFIVPCIDTYRKVDLRVLSFEVPPQEILSKDSVTVAVDAVVYFRISNATISVTNVEDAARSTKLLAQTTLRNILGTKTLAEMLSDREAISHQMQTTLDEATEPWGVKVERVEVKDVRLPVQLQRAMAAEAEAAREARAKVIVAEGEQKASRALKEAAEVIAESPSALQLRYLQTLNSISAEKNSTIIFPFPIDLLSAFLQRTPPKVEEPPSLPKKIRSCCLYKYPDWVQGMVGSEGGGGHGHSHGGGGGGLGSSQGAFHPSQAGSGPSTTTTSGRPLLRSMREAQFHSAAPPISAPNQSQTSVSQLDPALLIR.

Over residues 1 to 22 (MSATMSSARNSVVSLSSNGSVK) the composition is skewed to low complexity. Disordered stretches follow at residues 1 to 67 (MSAT…MATR) and 80 to 104 (SANSDDDSVKKEKQAEKDVEKGNGK). A compositionally biased stretch (polar residues) spans 27–38 (LVSNERSSSIQQ). Basic and acidic residues predominate over residues 86–104 (DSVKKEKQAEKDVEKGNGK). The helical transmembrane segment at 115 to 135 (GVCGWILTILSYLLIFFTLPI) threads the bilayer. The span at 403–421 (EGGGGHGHSHGGGGGGLGS) shows a compositional bias: gly residues. The segment at 403–481 (EGGGGHGHSH…SQLDPALLIR (79 aa)) is disordered. Residues 433–447 (SGPSTTTTSGRPLLR) are compositionally biased toward low complexity. Residues 463-473 (APNQSQTSVSQ) show a composition bias toward polar residues.

This sequence belongs to the band 7/mec-2 family. In terms of assembly, component of a non-voltage-gated amiloride-sensitive cation channel complex (also called the degenerin channel complex) composed of at least the mec-2, mec-4, mec-6 and mec-10 subunits; the complex mediates mechanotransduction in touch cells. Interacts with mec-6 and mec-4.

The protein localises to the membrane. Functionally, subunit of an amiloride-sensitive cation channel (degenerin channel complex) permeable for sodium, potassium, lithium and N-methylglucamine, and required for mechanosensory transduction (touch sensitivity). Positively regulates the activity of the putative mechanosensory transduction channel. May link the mechanosensory channel and the microtubule cytoskeleton of the touch receptor neurons. Required for the function of a set of six touch receptor neurons. This is Mechanosensory protein 2 from Caenorhabditis elegans.